Reading from the N-terminus, the 289-residue chain is Glycerol facilitator-aquaporin gla (289 aa).

Transmembrane regions (helical) follow at residues 10-30 and 41-61; these read ITEF…VANV and SWMI…VAFG. The NPA 1 motif lies at 68 to 70; the sequence is NPA. Helical transmembrane passes span 87-107, 151-171, and 209-229; these read AQYI…IVMV, FVGS…FFGS, and MVAH…LGGP. The NPA 2 motif lies at 235–237; sequence NPA. The chain crosses the membrane as a helical span at residues 264–284; sequence WYAWVPVLAPILASLAAVALF.

The protein belongs to the MIP/aquaporin (TC 1.A.8) family.

It is found in the cell membrane. Its function is as follows. Mixed channel protein that transports both water and glycerol. The polypeptide is Glycerol facilitator-aquaporin gla (gla) (Lactococcus lactis subsp. lactis (strain IL1403) (Streptococcus lactis)).